The chain runs to 280 residues: 4-hydroxy-3-methylbut-2-enyl diphosphate reductase (280 aa).

Residue cysteine 12 coordinates [4Fe-4S] cluster. (2E)-4-hydroxy-3-methylbut-2-enyl diphosphate contacts are provided by histidine 40 and histidine 72. The dimethylallyl diphosphate site is built by histidine 40 and histidine 72. Residues histidine 40 and histidine 72 each coordinate isopentenyl diphosphate. Cysteine 94 lines the [4Fe-4S] cluster pocket. Histidine 122 provides a ligand contact to (2E)-4-hydroxy-3-methylbut-2-enyl diphosphate. Histidine 122 is a binding site for dimethylallyl diphosphate. Histidine 122 is a binding site for isopentenyl diphosphate. Residue glutamate 124 is the Proton donor of the active site. Residue threonine 160 participates in (2E)-4-hydroxy-3-methylbut-2-enyl diphosphate binding. Residue cysteine 188 participates in [4Fe-4S] cluster binding. Positions 216, 218, and 260 each coordinate (2E)-4-hydroxy-3-methylbut-2-enyl diphosphate. Dimethylallyl diphosphate-binding residues include serine 216, asparagine 218, and serine 260. Residues serine 216, asparagine 218, and serine 260 each coordinate isopentenyl diphosphate.

Belongs to the IspH family. It depends on [4Fe-4S] cluster as a cofactor.

It catalyses the reaction isopentenyl diphosphate + 2 oxidized [2Fe-2S]-[ferredoxin] + H2O = (2E)-4-hydroxy-3-methylbut-2-enyl diphosphate + 2 reduced [2Fe-2S]-[ferredoxin] + 2 H(+). The catalysed reaction is dimethylallyl diphosphate + 2 oxidized [2Fe-2S]-[ferredoxin] + H2O = (2E)-4-hydroxy-3-methylbut-2-enyl diphosphate + 2 reduced [2Fe-2S]-[ferredoxin] + 2 H(+). It participates in isoprenoid biosynthesis; dimethylallyl diphosphate biosynthesis; dimethylallyl diphosphate from (2E)-4-hydroxy-3-methylbutenyl diphosphate: step 1/1. It functions in the pathway isoprenoid biosynthesis; isopentenyl diphosphate biosynthesis via DXP pathway; isopentenyl diphosphate from 1-deoxy-D-xylulose 5-phosphate: step 6/6. Catalyzes the conversion of 1-hydroxy-2-methyl-2-(E)-butenyl 4-diphosphate (HMBPP) into a mixture of isopentenyl diphosphate (IPP) and dimethylallyl diphosphate (DMAPP). Acts in the terminal step of the DOXP/MEP pathway for isoprenoid precursor biosynthesis. The protein is 4-hydroxy-3-methylbut-2-enyl diphosphate reductase of Pelobacter propionicus (strain DSM 2379 / NBRC 103807 / OttBd1).